Reading from the N-terminus, the 512-residue chain is MKRCYITTPIYYASGKPHIGHAFTTILADVIKRFKIQNGYEAFLLVGSDEHGNKIESKAKSLNLDPKTFVDINAQAFKLMWKTLNISFDHFIRTTDEIHKQQVQKTFQDLYDKKLIYQSEWKGAYCVECEQNYFTFNKQTMLCEIGHNLSLVQEPCWFISFSSTKNWIETTIGKNQLNIIPKSRASELKNNFINNGLNDLALTRKNVTWGIKVPFDPNQTIYVWFDALFSYITNLGFRNGDPNFIKWWNNDNKEREVIHLISREITRFHCIYWPIFLHLLDIKLPTQFLSHGWIVDGEGRKMSKSLNNVISPEQLIDQFGVDGTRYCLLKEMRLDKDNRCSVSILKEIYNADLANSFGNHVSRTFGMIKKYLNGKLEYQIITDNALQKIMILIDESIVQFDHYFNSYEFYRAINLLLKIVFELSKLIDDFKPWELFKNQEFSLLKQLLFTCVRCVQVCYVLLTPILVNTASKVFHLFNFADDACRKDQLRDATLLKKIIISNSMEVLFKRVD.

The short motif at 11-21 (YYASGKPHIGH) is the 'HIGH' region element. C126, C129, C143, and H147 together coordinate Zn(2+). A 'KMSKS' region motif is present at residues 301 to 305 (KMSKS). ATP is bound at residue K304.

It belongs to the class-I aminoacyl-tRNA synthetase family. MetG type 2A subfamily. In terms of assembly, monomer. It depends on Zn(2+) as a cofactor.

It is found in the cytoplasm. It catalyses the reaction tRNA(Met) + L-methionine + ATP = L-methionyl-tRNA(Met) + AMP + diphosphate. Functionally, is required not only for elongation of protein synthesis but also for the initiation of all mRNA translation through initiator tRNA(fMet) aminoacylation. The protein is Methionine--tRNA ligase (metG) of Mycoplasma genitalium (strain ATCC 33530 / DSM 19775 / NCTC 10195 / G37) (Mycoplasmoides genitalium).